The primary structure comprises 57 residues: RPSFCNLPVKPGPCSGFFSAFYYSQKTNKCHSFTYGGCRGPGNRFRTIEECRRTCVG.

One can recognise a BPTI/Kunitz inhibitor domain in the interval 5 to 55 (CNLPVKPGPCSGFFSAFYYSQKTNKCHSFTYGGCRGPGNRFRTIEECRRTC). Intrachain disulfides connect Cys5–Cys55, Cys14–Cys38, and Cys30–Cys51.

The protein belongs to the venom Kunitz-type family. Expressed by the venom gland.

The protein localises to the secreted. Interacts with vasopressin V2 receptor (V2R/AVPR2), probably in a selective manner. Inhibits vasopressin binding human V2R in the nanomolar range (Ki=21.5 nM), and also moderately inhibits vasopressin-induced cAMP production (IC(50)=574 nM). In vivo, intraperitoneal injection of this protein into rats increases diuresis by 2-fold, without any loss of electrolytes. This Dendroaspis viridis (Western green mamba) protein is Mambaquaretin-6.